Here is a 546-residue protein sequence, read N- to C-terminus: CTP synthase (546 aa).

Positions 1 to 269 (MNSNTKIIFV…DAKLVELLNL (269 aa)) are amidoligase domain. Ser16 is a CTP binding site. Residue Ser16 participates in UTP binding. Residues 17–22 (SLGKGV) and Asp74 contribute to the ATP site. Mg(2+) is bound by residues Asp74 and Glu143. Residues 150-152 (DIE), 190-195 (KTKPTQ), and Lys226 each bind CTP. Residues 190–195 (KTKPTQ) and Lys226 contribute to the UTP site. A Glutamine amidotransferase type-1 domain is found at 294 to 546 (TIAMVGKYVS…IQAAIENSNN (253 aa)). Gly356 lines the L-glutamine pocket. Cys383 (nucleophile; for glutamine hydrolysis) is an active-site residue. L-glutamine-binding positions include 384 to 387 (LGMQ), Glu407, and Arg474. Catalysis depends on residues His519 and Glu521.

The protein belongs to the CTP synthase family. Homotetramer.

It carries out the reaction UTP + L-glutamine + ATP + H2O = CTP + L-glutamate + ADP + phosphate + 2 H(+). The catalysed reaction is L-glutamine + H2O = L-glutamate + NH4(+). It catalyses the reaction UTP + NH4(+) + ATP = CTP + ADP + phosphate + 2 H(+). Its pathway is pyrimidine metabolism; CTP biosynthesis via de novo pathway; CTP from UDP: step 2/2. Allosterically activated by GTP, when glutamine is the substrate; GTP has no effect on the reaction when ammonia is the substrate. The allosteric effector GTP functions by stabilizing the protein conformation that binds the tetrahedral intermediate(s) formed during glutamine hydrolysis. Inhibited by the product CTP, via allosteric rather than competitive inhibition. Catalyzes the ATP-dependent amination of UTP to CTP with either L-glutamine or ammonia as the source of nitrogen. Regulates intracellular CTP levels through interactions with the four ribonucleotide triphosphates. The polypeptide is CTP synthase (Francisella tularensis subsp. mediasiatica (strain FSC147)).